The following is a 575-amino-acid chain: MLCILILLLHPRLCPVTKGGLGKPSGDIYTALFGAPCDCKGGTQTNNYATPTYTQVTDCGDKNAYLTYDTNWNGVSSPKWLCVRKPPSIPVINGRPGPCPSECTNNIKSQMHSSCYSSFSQCTQGNNTYFTAILQRTKSTSETNPVTSGLQPHGVLQAGCDGTVGKSVCWNQQAPIHVSDGGGPQDAVRELYVQKQIELVIQSQFPKLSYHPLARSKPRGPDIDAQMLDILSATHQALNISNPSLAQNCWLCLNQGTSMPLAFPVNISSFNASQNNCTPSLPFRVQPMPSQVYPCFFKGAQNNSFDIPVGVANFVNCSSSSNHSEALCPGPGQAFVCGNNLAFTALPANWTGSCVLAALLPDIDIISGDDPVPIPTFDYIAGRQKRAVTLIPLLVGLGVSTAVATGTAGLGVAVQSYTKLSHQLINDVQALSSTINDLQDQLDSLAEVVLQNRRGLDLLTAEQGGICLALQERCCFYANKSGIVRDKIKNLQEDLEKRRKALADNLFLTGLNGLLPYLLPFLGPLFAIILFFSFAPWILRRVTALIRDQLNSLLGKPIQIHYHQLATRDLEYGRL.

The signal sequence occupies residues 1 to 19 (MLCILILLLHPRLCPVTKG). The Extracellular portion of the chain corresponds to 20–517 (GLGKPSGDIY…LTGLNGLLPY (498 aa)). N-linked (GlcNAc...) asparagine; by host glycans are attached at residues Asn-126 and Asn-239. Positions 249–252 (CWLC) match the CXXC motif. 3 disulfide bridges follow: Cys-249-Cys-252, Cys-249-Cys-475, and Cys-467-Cys-474. N-linked (GlcNAc...) asparagine; by host glycosylation is found at Asn-266, Asn-271, Asn-302, Asn-316, Asn-322, and Asn-349. The segment at 390-410 (LIPLLVGLGVSTAVATGTAGL) is fusion peptide. Coiled-coil stretches lie at residues 411–461 (GVAV…LLTA) and 471–507 (QERC…DNLF). Positions 450–466 (LQNRRGLDLLTAEQGGI) are immunosuppression. The CX6CC signature appears at 467-475 (CLALQERCC). The N-linked (GlcNAc...) asparagine; by host glycan is linked to Asn-479. A helical transmembrane segment spans residues 518–538 (LLPFLGPLFAIILFFSFAPWI). Topologically, residues 539-575 (LRRVTALIRDQLNSLLGKPIQIHYHQLATRDLEYGRL) are cytoplasmic. The YXXL motif; contains endocytosis signal motif lies at 562 to 565 (YHQL).

As to quaternary structure, the mature envelope protein (Env) consists of a trimer of SU-TM heterodimers attached by a labile interchain disulfide bond. Post-translationally, specific enzymatic cleavages in vivo yield mature proteins. Envelope glycoproteins are synthesized as an inactive precursor that is N-glycosylated and processed likely by host cell furin or by a furin-like protease in the Golgi to yield the mature SU and TM proteins. The cleavage site between SU and TM requires the minimal sequence [KR]-X-[KR]-R. The CXXC motif is highly conserved across a broad range of retroviral envelope proteins. It is thought to participate in the formation of a labile disulfide bond possibly with the CX6CC motif present in the transmembrane protein. Isomerization of the intersubunit disulfide bond to an SU intrachain disulfide bond is thought to occur upon receptor recognition in order to allow membrane fusion.

The protein localises to the virion membrane. It is found in the host cell membrane. The surface protein (SU) attaches the virus to the host cell by binding to its receptor. This interaction triggers the refolding of the transmembrane protein (TM) and is thought to activate its fusogenic potential by unmasking its fusion peptide. Fusion occurs at the host cell plasma membrane. Functionally, the transmembrane protein (TM) acts as a class I viral fusion protein. Under the current model, the protein has at least 3 conformational states: pre-fusion native state, pre-hairpin intermediate state, and post-fusion hairpin state. During viral and target cell membrane fusion, the coiled coil regions (heptad repeats) assume a trimer-of-hairpins structure, positioning the fusion peptide in close proximity to the C-terminal region of the ectodomain. The formation of this structure appears to drive apposition and subsequent fusion of viral and target cell membranes. Membranes fusion leads to delivery of the nucleocapsid into the cytoplasm. The polypeptide is Envelope glycoprotein (env) (Squirrel monkey retrovirus (SMRV-H)).